Consider the following 536-residue polypeptide: Inactive phospholipase D5 (536 aa).

Topologically, residues 1–68 (MEIRQHEWLS…DKLEHSQQKC (68 aa)) are cytoplasmic. Residues 69 to 89 (IVIFALVCCFAVLVALIFSAV) form a helical membrane-spanning segment. Topologically, residues 90-536 (DIMGEDEDGL…NATGREPLSV (447 aa)) are extracellular. N-linked (GlcNAc...) asparagine glycosylation is present at Asn121. Positions 215–242 (NKGRLQSSFWIVDKQHVYIGSAGLDWRS) constitute a PLD phosphodiesterase 1 domain. Residue Asn302 is glycosylated (N-linked (GlcNAc...) asparagine). A PLD phosphodiesterase 2 domain is found at 434 to 460 (FPKLNRNKYMVTDGAAYIGNFDWVGND). Positions 503-536 (QPTKQPNCSSLSKLKSPSKQPAMANATGREPLSV) are disordered. The segment covering 511 to 521 (SSLSKLKSPSK) has biased composition (low complexity).

This sequence belongs to the phospholipase D family.

The protein resides in the membrane. This Mus musculus (Mouse) protein is Inactive phospholipase D5 (Pld5).